The sequence spans 445 residues: tRNA modification GTPase MnmE (445 aa).

Residues arginine 20, glutamate 79, and lysine 119 each coordinate (6S)-5-formyl-5,6,7,8-tetrahydrofolate. Residues 215-371 form the TrmE-type G domain; the sequence is GLKLAIIGPP…ILKNIENIAE (157 aa). Residue asparagine 225 coordinates K(+). Residues 225–230, 244–250, and 269–272 contribute to the GTP site; these read NVGKSS, SNIAGTT, and DTAG. Residue serine 229 coordinates Mg(2+). K(+) contacts are provided by serine 244, isoleucine 246, and threonine 249. Mg(2+) is bound at residue threonine 250. (6S)-5-formyl-5,6,7,8-tetrahydrofolate is bound at residue lysine 445.

It belongs to the TRAFAC class TrmE-Era-EngA-EngB-Septin-like GTPase superfamily. TrmE GTPase family. As to quaternary structure, homodimer. Heterotetramer of two MnmE and two MnmG subunits. Requires K(+) as cofactor.

The protein resides in the cytoplasm. Exhibits a very high intrinsic GTPase hydrolysis rate. Involved in the addition of a carboxymethylaminomethyl (cmnm) group at the wobble position (U34) of certain tRNAs, forming tRNA-cmnm(5)s(2)U34. The protein is tRNA modification GTPase MnmE of Rickettsia rickettsii (strain Iowa).